The chain runs to 421 residues: UDP-N-acetylglucosamine 1-carboxyvinyltransferase 1 (421 aa).

22–23 (KN) contributes to the phosphoenolpyruvate binding site. A UDP-N-acetyl-alpha-D-glucosamine-binding site is contributed by arginine 95. Cysteine 119 (proton donor) is an active-site residue. Cysteine 119 bears the 2-(S-cysteinyl)pyruvic acid O-phosphothioketal mark. UDP-N-acetyl-alpha-D-glucosamine is bound by residues 124-128 (RPIEQ), aspartate 308, and valine 330.

The protein belongs to the EPSP synthase family. MurA subfamily.

Its subcellular location is the cytoplasm. It carries out the reaction phosphoenolpyruvate + UDP-N-acetyl-alpha-D-glucosamine = UDP-N-acetyl-3-O-(1-carboxyvinyl)-alpha-D-glucosamine + phosphate. It participates in cell wall biogenesis; peptidoglycan biosynthesis. Its function is as follows. Cell wall formation. Adds enolpyruvyl to UDP-N-acetylglucosamine. This is UDP-N-acetylglucosamine 1-carboxyvinyltransferase 1 from Staphylococcus epidermidis (strain ATCC 35984 / DSM 28319 / BCRC 17069 / CCUG 31568 / BM 3577 / RP62A).